The sequence spans 228 residues: Prepilin leader peptidase/N-methyltransferase (228 aa).

Transmembrane regions (helical) follow at residues 18-38, 95-115, 116-136, 147-167, 168-188, and 204-224; these read LWGS…NVVI, RYPL…YLMA, PGVP…LAAI, LTLP…YVPL, AEAV…YWVF, and LLAA…LLLA.

This sequence belongs to the peptidase A24 family.

The protein localises to the cell inner membrane. It catalyses the reaction Typically cleaves a -Gly-|-Phe- bond to release an N-terminal, basic peptide of 5-8 residues from type IV prepilin, and then N-methylates the new N-terminal amino group, the methyl donor being S-adenosyl-L-methionine.. In terms of biological role, plays an essential role in type IV pili and type II pseudopili formation by proteolytically removing the leader sequence from substrate proteins and subsequently monomethylating the alpha-amino group of the newly exposed N-terminal phenylalanine. This chain is Prepilin leader peptidase/N-methyltransferase (pulO), found in Klebsiella pneumoniae.